Here is a 130-residue protein sequence, read N- to C-terminus: Small ribosomal subunit protein uS9 (130 aa).

It belongs to the universal ribosomal protein uS9 family.

The polypeptide is Small ribosomal subunit protein uS9 (Azotobacter vinelandii (strain DJ / ATCC BAA-1303)).